The following is a 153-amino-acid chain: Transcriptional repressor NrdR (153 aa).

Residues Met1 to Gly22 are disordered. A zinc finger lies at Cys3–Cys34. The ATP-cone domain maps to Leu49–Val139.

This sequence belongs to the NrdR family. Requires Zn(2+) as cofactor.

Negatively regulates transcription of bacterial ribonucleotide reductase nrd genes and operons by binding to NrdR-boxes. The sequence is that of Transcriptional repressor NrdR from Halalkalibacterium halodurans (strain ATCC BAA-125 / DSM 18197 / FERM 7344 / JCM 9153 / C-125) (Bacillus halodurans).